A 407-amino-acid polypeptide reads, in one-letter code: MGNNVFDVLKERGYIKQTTHEEEIRDLINKDKITFYIGFDPTADSLHIGHFLPLMMMAHMQKAGHRPIALVGGGTVRIGDPSGKSEMRKMLSKEAIDKNVSSIKSQISRFIDFSDDKAILVDNADWLLNLNYLEFIREIGVHFSVNKMLTAECFKQRLEKGLSFLEFNYMLMQAYDFLCLNRKYGCVMELGGDDQWSNMLAGTDLIRREESKSAYAMTCTLLTNSEGNKMGKTVNGALWLDKDKTSPYEFYQYWRNVDDADVEKCLALLTFLPMDEVRRLAALEGNKINEAKKVLAYEVTKLIHGEDEAKKAEEASEALFGAGKDMSNVPTVNISKDDLGKGILDILVETKILPSKGEARRLIQQGGLSINEEKVTDINMAVTEDLFEENSIIIRRGKKSYNRIVIE.

Tyr-36 serves as a coordination point for L-tyrosine. Positions 41–50 match the 'HIGH' region motif; the sequence is PTADSLHIGH. L-tyrosine-binding residues include Tyr-169 and Gln-173. The short motif at 229–233 is the 'KMSKS' region element; the sequence is KMGKT. Lys-232 is an ATP binding site. Residues 341-407 form the S4 RNA-binding domain; that stretch reads KGILDILVET…KKSYNRIVIE (67 aa).

Belongs to the class-I aminoacyl-tRNA synthetase family. TyrS type 1 subfamily. As to quaternary structure, homodimer.

The protein resides in the cytoplasm. It carries out the reaction tRNA(Tyr) + L-tyrosine + ATP = L-tyrosyl-tRNA(Tyr) + AMP + diphosphate + H(+). Its function is as follows. Catalyzes the attachment of tyrosine to tRNA(Tyr) in a two-step reaction: tyrosine is first activated by ATP to form Tyr-AMP and then transferred to the acceptor end of tRNA(Tyr). This is Tyrosine--tRNA ligase from Clostridium tetani (strain Massachusetts / E88).